The chain runs to 337 residues: Angiopoietin-related protein 7 (337 aa).

Positions 1-21 (MLRETWLCVILVAFVSHPVWL) are cleaved as a signal peptide. Positions 30–110 (QLKAAGCCEE…DIMQLQAAQT (81 aa)) form a coiled coil. A glycan (N-linked (GlcNAc...) asparagine) is linked at asparagine 49. One can recognise a Fibrinogen C-terminal domain in the interval 113–334 (QTSADAIYDC…RVEMKIRPEA (222 aa)). Cysteines 122 and 153 form a disulfide. Asparagine 244 and asparagine 258 each carry an N-linked (GlcNAc...) asparagine glycan. A disulfide bridge connects residues cysteine 276 and cysteine 289. An N-linked (GlcNAc...) asparagine glycan is attached at asparagine 320.

Homotetramer; disulfide-linked.

The protein localises to the secreted. Its function is as follows. Has a role in the formation and organization of the extracellular matrix. In the eye, it functions as a mediator of dexamethasone-induced matrix deposition in the trabecular meshwork, the tissue responsible for the outflow of the ocular aqueous humor and for the maintenance of intraocular pressure. Is a negative regulator of angiogenesis in the cornea, and plays a major role in maintaining corneal avascularity and transparency. This is Angiopoietin-related protein 7 (Angptl7) from Mus musculus (Mouse).